The following is a 216-amino-acid chain: Maintenance of carboxysome distribution protein A (216 aa).

Glycine 16, glycine 17, glycine 19, lysine 20, threonine 21, threonine 22, and glutamine 45 together coordinate ATP. Residue threonine 21 coordinates Mg(2+).

Belongs to the ParA family. McdA subfamily. Self-associates, associates with McdB.

It localises to the cytoplasm. The protein resides in the nucleoid. It carries out the reaction ATP + H2O = ADP + phosphate + H(+). Functionally, mcdA and McdB together mediate carboxysome positioning on the nucleoid and prevent their aggregation in the cell. McdA is an ATPase that forms dynamic gradients on the nucleoid in response to adapter protein McdB, which associates with carboxysomes. The interplay between McdA gradients on the nucleoid and McdB-bound carboxysomes result in the equal spacing of Cbs along the cell length. Its function is as follows. Incorrect positioning (aggregation) of carboxysomes results in reduced CO(2) fixation by encapsulated form 1 ribulose-1,5-bisphosphate carboxylase (RuBisCO, cbbL/cbbS), which leads to slower growth. This Halothiobacillus neapolitanus (strain ATCC 23641 / c2) (Thiobacillus neapolitanus) protein is Maintenance of carboxysome distribution protein A.